Consider the following 266-residue polypeptide: Proteasome subunit beta type-7 (266 aa).

A propeptide spanning residues 1-33 is cleaved from the precursor; it reads MNHDPFSWGRPADSTYGAYNTQIANAGASPMVN.

The protein belongs to the peptidase T1B family. In terms of assembly, the 26S proteasome consists of a 20S proteasome core and two 19S regulatory subunits. The 20S proteasome core is composed of 28 subunits that are arranged in four stacked rings, resulting in a barrel-shaped structure. The two end rings are each formed by seven alpha subunits, and the two central rings are each formed by seven beta subunits. The catalytic chamber with the active sites is on the inside of the barrel. Interacts with CIC1.

It localises to the cytoplasm. It is found in the nucleus. In terms of biological role, non-catalytic component of the proteasome which degrades poly-ubiquitinated proteins in the cytoplasm and in the nucleus. It is essential for the regulated turnover of proteins and for the removal of misfolded proteins. The proteasome is a multicatalytic proteinase complex that is characterized by its ability to cleave peptides with Arg, Phe, Tyr, Leu, and Glu adjacent to the leaving group at neutral or slightly basic pH. It has an ATP-dependent proteolytic activity. PRE3 and PRE4 are necessary for the peptidyl-glutamyl-peptide-hydrolyzing activity. This Saccharomyces cerevisiae (strain ATCC 204508 / S288c) (Baker's yeast) protein is Proteasome subunit beta type-7 (PRE4).